A 670-amino-acid chain; its full sequence is Protein HBS1 (670 aa).

Disordered stretches follow at residues 60-88 (KDIQ…ESFQ) and 164-202 (KTVS…VSGR). A compositionally biased stretch (acidic residues) spans 63-75 (QEEEADEDEDEDA). Positions 189–200 (PSPKVPSSPVVS) are enriched in low complexity. Residues 245-468 (KSHIHMIVIG…DVIENFKIPE (224 aa)) form the tr-type G domain. The segment at 254–261 (GHVDAGKS) is G1. 254–261 (GHVDAGKS) contacts GTP. Residues 310–314 (GITMD) are G2. Positions 331 to 334 (DAPG) are G3. GTP-binding positions include 393 to 396 (NKLD) and 432 to 434 (SGL). The segment at 393-396 (NKLD) is G4. The tract at residues 432-434 (SGL) is G5.

The protein belongs to the TRAFAC class translation factor GTPase superfamily. Classic translation factor GTPase family. Component of the Pelota-HBS1L complex, also named Dom34-Hbs1 complex, composed of pelo and HBS1. As to expression, expressed in ovaries (at protein level).

Its subcellular location is the cytoplasm. The enzyme catalyses GTP + H2O = GDP + phosphate + H(+). Its function is as follows. GTPase component of the Pelota-HBS1L complex, a complex that recognizes stalled ribosomes and triggers the No-Go Decay (NGD) pathway. The Pelota-HBS1L complex recognizes ribosomes stalled at the 3' end of an mRNA and engages stalled ribosomes by destabilizing mRNA in the mRNA channel. Following ribosome-binding, the Pelota-HBS1L complex promotes recruitment of pix, which drives the disassembly of stalled ribosomes, followed by degradation of damaged mRNAs as part of the NGD pathway. Together with pelo, required for transposon silencing in the ovary and testis. Together with pelo, promotes meiosis and spermatid individualization during spermatogenesis. This is Protein HBS1 from Drosophila melanogaster (Fruit fly).